We begin with the raw amino-acid sequence, 239 residues long: MNIDIVISADHIDEKRLINKTVIIIDILRATSVITTAINNGCKKVIPVLTVEEAKDIAKNSKEDIILGGERNALKIDGFNFSNSPLEYTKNYVEGKTVVLSTTNGTRAINNSFNAKTILISALINSKATAKAIDKLNEDLIIINSGTNGQFSIDDFICSGYLIDCLYNIRKDLELSDIAKTAHYIYMNNKDIESFVKKATHYSRLKSLNLEKDLEYCFQKDIIDVVPQYKDGYIIKSNI.

This sequence belongs to the ComB family. Mg(2+) serves as cofactor.

The catalysed reaction is (2R)-O-phospho-3-sulfolactate + H2O = (2R)-3-sulfolactate + phosphate. In Clostridium botulinum (strain Okra / Type B1), this protein is Probable 2-phosphosulfolactate phosphatase.